We begin with the raw amino-acid sequence, 928 residues long: RhoGEF domain-containing protein gxcH (928 aa).

Low complexity predominate over residues 30–48; it reads SKSFDNNNNNNSNTNNIKN. Disordered stretches follow at residues 30–76, 90–201, and 318–410; these read SKSF…PPVP, ITNY…PPLG, and DNGV…NKDT. Positions 93–103 are enriched in polar residues; sequence YIPTTPPSINI. Over residues 112 to 123 the composition is skewed to acidic residues; it reads DNYDDNYDDNYS. Polar residues-rich tracts occupy residues 129-141, 175-187, and 334-367; these read TSTT…SPEF, ETFN…EGLQ, and KSGT…NLRG. The segment covering 377–407 has biased composition (low complexity); sequence NQTTNKNNSNNNNNNTTTNNNNNNNNNNNNN. A DH domain is found at 484 to 671; the sequence is IFNKVVKEII…GKIVSDINGK (188 aa). Residues 699–807 form a PH-like region; the sequence is FIGEGKVKKV…NKIEDQIVSE (109 aa). Positions 835 to 928 are disordered; that stretch reads SDSQSDFVDH…NTEPENFSFY (94 aa). Residues 848–857 show a composition bias toward low complexity; sequence QEQQEQQQQQ.

Its function is as follows. GTPase-activating protein. The protein is RhoGEF domain-containing protein gxcH (gxcH) of Dictyostelium discoideum (Social amoeba).